The primary structure comprises 667 residues: Primary amine oxidase (667 aa).

The N-terminal stretch at 1-18 (KFALFSVLTLLSFHAVFS) is a signal peptide. N-linked (GlcNAc...) asparagine glycosylation occurs at asparagine 149. Cysteine 155 and cysteine 176 are joined by a disulfide. Residues 216–246 (PTAENTEYQVSKQSPPFGPKQHSLTSHQPQG) are disordered. The span at 218–229 (AENTEYQVSKQS) shows a compositional bias: polar residues. N-linked (GlcNAc...) asparagine glycosylation is present at asparagine 252. 316 to 327 (FFDSGEFGFGLS) contributes to the substrate binding site. The active-site Proton acceptor is the aspartate 318. A disulfide bridge connects residues cysteine 337 and cysteine 363. Asparagine 382 is a glycosylation site (N-linked (GlcNAc...) asparagine). Residue 402–407 (VGNYDN) coordinates substrate. The Schiff-base intermediate with substrate; via topaquinone role is filled by tyrosine 405. Tyrosine 405 bears the 2',4',5'-topaquinone mark. 2 residues coordinate Cu cation: histidine 460 and histidine 462. 3 residues coordinate Mn(2+): aspartate 469, phenylalanine 470, and aspartate 471. Asparagine 576 carries N-linked (GlcNAc...) asparagine glycosylation. Mn(2+) contacts are provided by aspartate 610 and isoleucine 611. Histidine 621 lines the Cu cation pocket.

The protein belongs to the copper/topaquinone oxidase family. In terms of assembly, homodimer. Requires Cu cation as cofactor. Zn(2+) is required as a cofactor. The cofactor is L-topaquinone. It depends on Mn(2+) as a cofactor. Post-translationally, glycosylated; contains two carbohydrate chains per monomer. In terms of processing, topaquinone (TPQ) is generated by copper-dependent autoxidation of a specific tyrosyl residue.

The catalysed reaction is a primary methyl amine + O2 + H2O = an aldehyde + H2O2 + NH4(+). This chain is Primary amine oxidase, found in Lens culinaris (Lentil).